Consider the following 108-residue polypeptide: Precursor of CEP16 (108 aa).

The signal sequence occupies residues 1 to 27 (MVMAKNLTKFYVVFLVVLMMVVSLLLA). A propeptide spanning residues 28 to 92 (IEGRPVKDSS…VGHHRAKGYK (65 aa)) is cleaved from the precursor. N50 and N98 each carry an N-linked (GlcNAc...) asparagine glycan. Residues 76 to 108 (QSGPSPGVGHHRAKGYKMFGRANDSGPSPGVGH) form a disordered region. Residues P102 and P104 each carry the hydroxyproline modification.

The protein belongs to the C-terminally encoded plant signaling peptide (CEP) family. As to quaternary structure, interacts with CEP receptors (e.g. CEPR1 and CEPR2). Post-translationally, the mature small signaling peptide is generated by proteolytic processing of the longer precursor.

The protein localises to the secreted. The protein resides in the extracellular space. It localises to the apoplast. Extracellular signaling peptide that may regulate primary root growth rate and systemic nitrogen (N)-demand signaling. The polypeptide is Precursor of CEP16 (Arabidopsis thaliana (Mouse-ear cress)).